Consider the following 172-residue polypeptide: Small ribosomal subunit protein uS5 (172 aa).

The S5 DRBM domain maps to 17–80 (MREKMIAVNR…EEARRKMIKV (64 aa)).

Belongs to the universal ribosomal protein uS5 family. In terms of assembly, part of the 30S ribosomal subunit. Contacts proteins S4 and S8.

In terms of biological role, with S4 and S12 plays an important role in translational accuracy. Its function is as follows. Located at the back of the 30S subunit body where it stabilizes the conformation of the head with respect to the body. The chain is Small ribosomal subunit protein uS5 from Janthinobacterium sp. (strain Marseille) (Minibacterium massiliensis).